The following is a 243-amino-acid chain: Carboxy-S-adenosyl-L-methionine synthase (243 aa).

S-adenosyl-L-methionine is bound by residues Y40, G65 to S67, D90 to N91, D118 to I119, N133, and R200.

Belongs to the class I-like SAM-binding methyltransferase superfamily. Cx-SAM synthase family. In terms of assembly, homodimer.

It carries out the reaction prephenate + S-adenosyl-L-methionine = carboxy-S-adenosyl-L-methionine + 3-phenylpyruvate + H2O. Catalyzes the conversion of S-adenosyl-L-methionine (SAM) to carboxy-S-adenosyl-L-methionine (Cx-SAM). This is Carboxy-S-adenosyl-L-methionine synthase from Shewanella pealeana (strain ATCC 700345 / ANG-SQ1).